The chain runs to 743 residues: NAD(P)H-quinone oxidoreductase subunit 5, chloroplastic (743 aa).

16 consecutive transmembrane segments (helical) span residues Trp-9 to Phe-29, Trp-40 to Ile-60, Ile-89 to Ile-109, Phe-125 to Ile-145, Ile-147 to Thr-167, Gly-185 to Phe-205, Asn-219 to Ala-239, Thr-258 to Ala-278, Leu-280 to Ile-300, Leu-327 to Ile-347, Ala-354 to Phe-374, Thr-396 to Ser-416, Trp-425 to Tyr-445, Ile-546 to Pro-566, Leu-607 to Tyr-627, and Phe-721 to Phe-741.

This sequence belongs to the complex I subunit 5 family. NDH is composed of at least 16 different subunits, 5 of which are encoded in the nucleus.

It is found in the plastid. It localises to the chloroplast thylakoid membrane. The enzyme catalyses a plastoquinone + NADH + (n+1) H(+)(in) = a plastoquinol + NAD(+) + n H(+)(out). It catalyses the reaction a plastoquinone + NADPH + (n+1) H(+)(in) = a plastoquinol + NADP(+) + n H(+)(out). Its function is as follows. NDH shuttles electrons from NAD(P)H:plastoquinone, via FMN and iron-sulfur (Fe-S) centers, to quinones in the photosynthetic chain and possibly in a chloroplast respiratory chain. The immediate electron acceptor for the enzyme in this species is believed to be plastoquinone. Couples the redox reaction to proton translocation, and thus conserves the redox energy in a proton gradient. The sequence is that of NAD(P)H-quinone oxidoreductase subunit 5, chloroplastic (ndhF) from Citrus sinensis (Sweet orange).